We begin with the raw amino-acid sequence, 277 residues long: Protein OPG166 (277 aa).

N-linked (GlcNAc...) asparagine; by host glycans are attached at residues Asn-29 and Asn-58. Helical transmembrane passes span 124–144, 156–176, 186–206, 219–239, and 247–267; these read TMLMFIFTGITLFLLFLEIAY, GILQVFGCVIAMIELCGAFLF, IIGLLMMTLPSIFLIITKVFS, LIIYYQLAGYILTVLGLGLSL, and LLLSGLGTIMVSEHFGLLFLV.

The protein belongs to the orthopoxvirus OPG166 protein family.

The protein resides in the host membrane. Functionally, promotes, when overexpressed, the influx of extracellular Ca(2+), leading to membrane permeability and host cell necrosis. The protein is Protein OPG166 (OPG166) of Cynomys gunnisoni (Gunnison's prairie dog).